The chain runs to 396 residues: Ribosomal RNA large subunit methyltransferase I (396 aa).

A PUA domain is found at 2 to 81 (SVRLVLAKGR…ESIDIAFFSR (80 aa)).

It belongs to the methyltransferase superfamily. RlmI family.

It is found in the cytoplasm. It catalyses the reaction cytidine(1962) in 23S rRNA + S-adenosyl-L-methionine = 5-methylcytidine(1962) in 23S rRNA + S-adenosyl-L-homocysteine + H(+). In terms of biological role, specifically methylates the cytosine at position 1962 (m5C1962) of 23S rRNA. In Shigella flexneri serotype 5b (strain 8401), this protein is Ribosomal RNA large subunit methyltransferase I.